The sequence spans 475 residues: Splicing factor U2AF 65 kDa subunit (475 aa).

Positions 1 to 90 are disordered; the sequence is MSDFDEFERQ…RHEKKKKVRK (90 aa). Serine 2 bears the N-acetylserine mark. Position 2 is a phosphoserine (serine 2). The tract at residues 2–93 is required for interaction with PRPF19; that stretch reads SDFDEFERQL…KKKKVRKYWD (92 aa). The segment covering 7-22 has biased composition (basic and acidic residues); sequence FERQLNENKQERDKEN. Lysine 15 carries the 5-hydroxylysine; by JMJD6; alternate modification. Lysine 15 is covalently cross-linked (Glycyl lysine isopeptide (Lys-Gly) (interchain with G-Cter in SUMO2); alternate). Positions 17-47 are necessary and sufficient to stimulate pre-mRNAs 3'-end cleavage in a CFIm complex-dependent manner; that stretch reads ERDKENRHRKRSHSRSRSRDRKRRSRSRDRR. Positions 23-46 are enriched in basic residues; it reads RHRKRSHSRSRSRDRKRRSRSRDR. Over residues 47-56 the composition is skewed to basic and acidic residues; sequence RNRDQRSASR. A Glycyl lysine isopeptide (Lys-Gly) (interchain with G-Cter in SUMO2); alternate cross-link involves residue lysine 70. Residue lysine 70 is modified to N6-acetyllysine; alternate. A Phosphoserine modification is found at serine 79. Positions 79–89 are enriched in basic residues; that stretch reads SPRHEKKKKVR. RRM domains lie at 149–231, 259–337, and 385–466; these read RRLY…RPHD, HKLF…RASV, and LPEE…YCDP. A 5-hydroxylysine; by JMJD6 modification is found at lysine 276. Residue serine 294 is modified to Phosphoserine.

Belongs to the splicing factor SR family. In terms of assembly, interacts with U2AF1L4. Heterodimer with U2AF1. Binds unphosphorylated SF1. Interacts with SCAF11 and SNW1. Interacts with ZRSR2/U2AF1-RS2. Interacts with RBM17. Interacts with PRPF19; the interaction is direct. Interacts with POLR2A (via the C-terminal domain); recruits PRPF19 and the Prp19 complex to the pre-mRNA. Interacts with KHDC4 (Isoform 2). Interacts with ZRSR2. Interacts with the SF3B complex composed of SF3B1, SF3B2, SF3B3, SF3B4, SF3B5, SF3B6 and PHF5A. Interacts (via N-terminus) with CPSF7 (via C-terminus); this interaction stimulates pre-mRNA 3'-end processing by promoting the recruitment of the CFIm complex to cleavage and polyadenylation signals. Interacts with ARGLU1; interaction may be involved in ARGLU1-mediated modulation of alternative splicing. Lysyl-hydroxylation at Lys-15 and Lys-276 affects the mRNA splicing activity of the protein, leading to regulate some, but not all, alternative splicing events.

The protein resides in the nucleus. Its function is as follows. Plays a role in pre-mRNA splicing and 3'-end processing. By recruiting PRPF19 and the PRP19C/Prp19 complex/NTC/Nineteen complex to the RNA polymerase II C-terminal domain (CTD), and thereby pre-mRNA, may couple transcription to splicing. Induces cardiac troponin-T (TNNT2) pre-mRNA exon inclusion in muscle. Regulates the TNNT2 exon 5 inclusion through competition with MBNL1. Binds preferentially to a single-stranded structure within the polypyrimidine tract of TNNT2 intron 4 during spliceosome assembly. Required for the export of mRNA out of the nucleus, even if the mRNA is encoded by an intron-less gene. Represses the splicing of MAPT/Tau exon 10. Positively regulates pre-mRNA 3'-end processing by recruiting the CFIm complex to cleavage and polyadenylation signals. The protein is Splicing factor U2AF 65 kDa subunit (U2AF2) of Homo sapiens (Human).